The following is a 449-amino-acid chain: Glucose-6-phosphate isomerase (449 aa).

Thr38 carries the phosphothreonine modification. Catalysis depends on Glu290, which acts as the Proton donor. Active-site residues include His311 and Lys425.

The protein belongs to the GPI family.

It localises to the cytoplasm. It catalyses the reaction alpha-D-glucose 6-phosphate = beta-D-fructose 6-phosphate. The protein operates within carbohydrate biosynthesis; gluconeogenesis. Its pathway is carbohydrate degradation; glycolysis; D-glyceraldehyde 3-phosphate and glycerone phosphate from D-glucose: step 2/4. Its function is as follows. Catalyzes the reversible isomerization of glucose-6-phosphate to fructose-6-phosphate. In Geobacillus thermodenitrificans (strain NG80-2), this protein is Glucose-6-phosphate isomerase.